The chain runs to 298 residues: Triosephosphate isomerase, chloroplastic (298 aa).

Residues 1–18 show a composition bias toward pro residues; the sequence is MAARRPSPPPASPPPPRP. The interval 1-32 is disordered; it reads MAARRPSPPPASPPPPRPRSTTTTRTTSSASA. Residues 1-43 constitute a chloroplast transit peptide; the sequence is MAARRPSPPPASPPPPRPRSTTTTRTTSSASAAPAAAQRLVAM. A compositionally biased stretch (low complexity) spans 19–32; the sequence is RSTTTTRTTSSASA. Positions 54 and 56 each coordinate substrate. The active-site Electrophile is H138. C186 is subject to Cysteine derivative. E208 functions as the Proton acceptor in the catalytic mechanism.

The protein belongs to the triosephosphate isomerase family. As to quaternary structure, homodimer.

The protein resides in the plastid. It is found in the chloroplast. It carries out the reaction D-glyceraldehyde 3-phosphate = dihydroxyacetone phosphate. Its pathway is carbohydrate biosynthesis; Calvin cycle. This Secale cereale (Rye) protein is Triosephosphate isomerase, chloroplastic.